Reading from the N-terminus, the 346-residue chain is 4-hydroxy-2-oxovalerate aldolase (346 aa).

In terms of domain architecture, Pyruvate carboxyltransferase spans 8–260; it reads VILHDMSLRD…ETGIDLYKIM (253 aa). 16–17 provides a ligand contact to substrate; the sequence is RD. D17 contacts Mn(2+). The Proton acceptor role is filled by H20. Residues S170 and H199 each contribute to the substrate site. Residues H199 and H201 each contribute to the Mn(2+) site. Y290 contributes to the substrate binding site.

It belongs to the 4-hydroxy-2-oxovalerate aldolase family.

The enzyme catalyses (S)-4-hydroxy-2-oxopentanoate = acetaldehyde + pyruvate. The protein operates within aromatic compound metabolism; naphthalene degradation. The chain is 4-hydroxy-2-oxovalerate aldolase (nahM) from Pseudomonas putida (Arthrobacter siderocapsulatus).